The primary structure comprises 557 residues: Dihydroxy-acid dehydratase (557 aa).

Aspartate 78 is a binding site for Mg(2+). Cysteine 119 serves as a coordination point for [2Fe-2S] cluster. Residues aspartate 120 and lysine 121 each contribute to the Mg(2+) site. Position 121 is an N6-carboxylysine (lysine 121). Cysteine 192 provides a ligand contact to [2Fe-2S] cluster. Position 443 (glutamate 443) interacts with Mg(2+). The Proton acceptor role is filled by serine 469.

This sequence belongs to the IlvD/Edd family. Homodimer. Requires [2Fe-2S] cluster as cofactor. The cofactor is Mg(2+).

It catalyses the reaction (2R)-2,3-dihydroxy-3-methylbutanoate = 3-methyl-2-oxobutanoate + H2O. The catalysed reaction is (2R,3R)-2,3-dihydroxy-3-methylpentanoate = (S)-3-methyl-2-oxopentanoate + H2O. The protein operates within amino-acid biosynthesis; L-isoleucine biosynthesis; L-isoleucine from 2-oxobutanoate: step 3/4. It functions in the pathway amino-acid biosynthesis; L-valine biosynthesis; L-valine from pyruvate: step 3/4. Its function is as follows. Functions in the biosynthesis of branched-chain amino acids. Catalyzes the dehydration of (2R,3R)-2,3-dihydroxy-3-methylpentanoate (2,3-dihydroxy-3-methylvalerate) into 2-oxo-3-methylpentanoate (2-oxo-3-methylvalerate) and of (2R)-2,3-dihydroxy-3-methylbutanoate (2,3-dihydroxyisovalerate) into 2-oxo-3-methylbutanoate (2-oxoisovalerate), the penultimate precursor to L-isoleucine and L-valine, respectively. The polypeptide is Dihydroxy-acid dehydratase (Persephonella marina (strain DSM 14350 / EX-H1)).